The following is a 459-amino-acid chain: Siroheme synthase 2 (459 aa).

The segment at 1–204 (MDYLPIFCQL…EDRERVQQLT (204 aa)) is precorrin-2 dehydrogenase /sirohydrochlorin ferrochelatase. Residues 22-23 (EI) and 43-44 (LD) each bind NAD(+). Serine 128 carries the phosphoserine modification. The interval 216-459 (GEVTLVGAGP…KLSWFSDQTA (244 aa)) is uroporphyrinogen-III C-methyltransferase. Position 225 (proline 225) interacts with S-adenosyl-L-methionine. The active-site Proton acceptor is the aspartate 248. The active-site Proton donor is lysine 270. Residues 301 to 303 (GGD), isoleucine 306, 331 to 332 (TA), methionine 382, and glycine 411 each bind S-adenosyl-L-methionine.

It in the N-terminal section; belongs to the precorrin-2 dehydrogenase / sirohydrochlorin ferrochelatase family. In the C-terminal section; belongs to the precorrin methyltransferase family.

It carries out the reaction uroporphyrinogen III + 2 S-adenosyl-L-methionine = precorrin-2 + 2 S-adenosyl-L-homocysteine + H(+). The catalysed reaction is precorrin-2 + NAD(+) = sirohydrochlorin + NADH + 2 H(+). The enzyme catalyses siroheme + 2 H(+) = sirohydrochlorin + Fe(2+). It participates in cofactor biosynthesis; adenosylcobalamin biosynthesis; precorrin-2 from uroporphyrinogen III: step 1/1. Its pathway is cofactor biosynthesis; adenosylcobalamin biosynthesis; sirohydrochlorin from precorrin-2: step 1/1. The protein operates within porphyrin-containing compound metabolism; siroheme biosynthesis; precorrin-2 from uroporphyrinogen III: step 1/1. It functions in the pathway porphyrin-containing compound metabolism; siroheme biosynthesis; siroheme from sirohydrochlorin: step 1/1. It participates in porphyrin-containing compound metabolism; siroheme biosynthesis; sirohydrochlorin from precorrin-2: step 1/1. Functionally, multifunctional enzyme that catalyzes the SAM-dependent methylations of uroporphyrinogen III at position C-2 and C-7 to form precorrin-2 via precorrin-1. Then it catalyzes the NAD-dependent ring dehydrogenation of precorrin-2 to yield sirohydrochlorin. Finally, it catalyzes the ferrochelation of sirohydrochlorin to yield siroheme. The polypeptide is Siroheme synthase 2 (Pectobacterium atrosepticum (strain SCRI 1043 / ATCC BAA-672) (Erwinia carotovora subsp. atroseptica)).